The following is an 857-amino-acid chain: MQEQYNPQDIEQKVQKHWDDNKTFVVSEDPNKEKFYCLSMFPYPSGRLHMGHVRNYTIGDVVSRFQRLQGKNVMQPIGWDAFGLPAENAAVKNNTAPAPWTYENIEYMKNQLKLLGFGYDWNREFATCTPEYYRWEQEFFTKLYEKGLVYKKTSSVNWCPNDQTVLANEQVEDGCCWRCDTPVEQKEIPQWFIKITEYAQELLDDLDKLEGWPEMVKTMQRNWIGRSEGVELKFEVKGQQDLEVYTTRPDTLMGVTYVGIAAGHPLATLAAENNPELAAFIEECKNTKVAEAELATMEKKGMATGLTAIHPLNGREVPVYVANFVLMDYGTGAVMAVPAHDQRDFEFATKYGLDIIPVIKPADGSELDISEAAYTEKGVLFDSGEFDGLEFQAAFDAIAAKLEAEGKGTKTVNFRLRDWGVSRQRYWGAPIPMVTTEDGEVHPVPADQLPVILPEDVVMDGVTSPIKADKEWAKTTFNGEPALRETDTFDTFMESSWYYARYCSPQADDILDPEKANYWLPVDQYIGGIEHACMHLLYSRFFHKLLRDAGYVTSDEPFKQLLCQGMVLADAFYFENEKGGKEWVAPTDVAVERDGKGRIISAKDNEGRDVTHSGMIKMSKSKNNGIDPQEMVDKYGADTVRLFMMFASPADMTLEWQESGVEGANRFLKRVWKLVKEHAEKGAAEAVDTAALSGEQKALRRDVHKTIAKVTDDIARRQTFNTAIAAIMELMNKLAKAPQESAQDRAILDEALKAVVTMLYPITPHISYELWTALGESDIDNAAWPTFDEKALVEDEKTIVVQVNGKLRAKLTVAADATKEQVEELGLNDENVTKFTDGLTIRKVIYVPGKLLNIVAN.

The short motif at 42–52 (PYPSGRLHMGH) is the 'HIGH' region element. Residues 617 to 621 (KMSKS) carry the 'KMSKS' region motif. Residue lysine 620 coordinates ATP.

Belongs to the class-I aminoacyl-tRNA synthetase family.

The protein localises to the cytoplasm. The catalysed reaction is tRNA(Leu) + L-leucine + ATP = L-leucyl-tRNA(Leu) + AMP + diphosphate. This Vibrio parahaemolyticus serotype O3:K6 (strain RIMD 2210633) protein is Leucine--tRNA ligase.